A 1003-amino-acid chain; its full sequence is PHD finger protein 12 (1003 aa).

A disordered region spans residues 29–59; the sequence is APPKTDEAEKRSRKPEKESRRSGRATNHDSC. Residues 32–59 show a composition bias toward basic and acidic residues; sequence KTDEAEKRSRKPEKESRRSGRATNHDSC. The segment at 56–105 adopts a PHD-type 1 zinc-finger fold; that stretch reads HDSCDSCKEGGDLLCCDHCPAAFHLQCCNPPLSEEMLPPGEWMCHRCTVR. Residues cysteine 59, serine 61, cysteine 62, histidine 79, and cysteine 82 each contribute to the Zn(2+) site. Disordered stretches follow at residues 110-183 and 234-255; these read EQKK…HNDV and TTALPGSSKRRRKEETTGKNVK. A phosphoserine mark is found at serine 131 and serine 134. The segment covering 138–161 has biased composition (basic and acidic residues); sequence LLDRPASKTELKAIAHARILERRA. The span at 165–178 shows a compositional bias: polar residues; it reads GTPTSNASTETPTS. The SIN3 interacting domain 1 stretch occupies residues 202 to 241; sequence VQPQLRRPFELLIAAAMERNPTQFQLPNELTCTTALPGSS. The segment at 271–321 adopts a PHD-type 2; atypical zinc-finger fold; that stretch reads VKVCFTCNRSCRVAPLIQCDYCPLLFHMDCLEPPLTAMPLGRWMCPNHIEH. Positions 274, 277, 289, 292, 297, 300, 315, and 318 each coordinate Zn(2+). The interval 328-364 is SIN3 interacting domain 2; sequence NLTLSNRCQVFDRFQDTISQHVVKVDFLNRIHKKHPP. A Glycyl lysine isopeptide (Lys-Gly) (interchain with G-Cter in SUMO2) cross-link involves residue lysine 467. 2 disordered regions span residues 531–583 and 641–671; these read KAPC…GWPR and HRKTVQSQIGPSSTESRPLGSPPNATRVLTP. Serine 555 carries the phosphoserine modification. A phosphothreonine mark is found at threonine 557 and threonine 570. The segment covering 641-656 has biased composition (polar residues); it reads HRKTVQSQIGPSSTES. Threonine 670 is subject to Phosphothreonine. The FHA domain occupies 814-868; sequence LYIGTGADMDVCLTNYGHCNYVSGKHACIFYDENTKHYELLNYSEHGTTVDNVLY. Residues 894 to 922 form a disordered region; it reads RRRHQKQDEEPSEEAAMMSSQAQGPQRRP. A Glycyl lysine isopeptide (Lys-Gly) (interchain with G-Cter in SUMO2) cross-link involves residue lysine 899. The segment covering 907 to 916 has biased composition (low complexity); that stretch reads EAAMMSSQAQ. Residues lysine 972, lysine 986, and lysine 990 each participate in a glycyl lysine isopeptide (Lys-Gly) (interchain with G-Cter in SUMO2) cross-link.

In terms of assembly, component of SIN3 complexes. Interacts with SIN3A in a complex composed of HDAC1, SAP30 and SIN3A. Component of the SIN3B complex, which includes SIN3B, HDAC2 or HDAC1, PHF12 and MORF4L1; interacts directly with all subunits. Interacts with TLE5. In terms of tissue distribution, expressed mainly in heart, brain, lung, liver and testis.

Its subcellular location is the nucleus. Functionally, transcriptional repressor acting as key scaffolding subunit of SIN3 complexes which contributes to complex assembly by contacting each core subunit domain, stabilizes the complex and constitutes the substrate receptor by recruiting the H3 histone tail. SIN3 complexes are composed of a SIN3 scaffold subunit, one catalytic core (HDAC1 or HDAC2) and 2 chromatin targeting modules. SIN3B complex represses transcription and counteracts the histone acetyltransferase activity of EP300 through the recognition H3K27ac marks by PHF12 and the activity of the histone deacetylase HDAC2. SIN3B complex is recruited downstream of the constitutively active genes transcriptional start sites through interaction with histones and mitigates histone acetylation and RNA polymerase II progression within transcribed regions contributing to the regulation of transcription. May also repress transcription in a SIN3A-independent manner through recruitment of functional TLE5 complexes to DNA. May also play a role in ribosomal biogenesis. This Mus musculus (Mouse) protein is PHD finger protein 12.